A 1024-amino-acid polypeptide reads, in one-letter code: Translation initiation factor IF-2 (1024 aa).

The segment at 33–425 (SHMSSLEDDT…GRVKKTKTMK (393 aa)) is disordered. 4 stretches are compositionally biased toward basic and acidic residues: residues 43–62 (EARVRESLHGMKNKQADTRV), 135–148 (TPEDPVVKATELKP), 167–198 (TPAKEEPTKAKEVPAAKEVPAAKEAPKVKETS), and 223–263 (SKPD…KEVR). A compositionally biased stretch (polar residues) spans 316 to 325 (EATQAPTSPQ). The segment covering 332–350 (KPADKGPARAQAHRPDTGR) has biased composition (basic and acidic residues). The span at 365-375 (RSKKKEWKKKG) shows a compositional bias: basic residues. A compositionally biased stretch (basic and acidic residues) spans 394-406 (SVVEGKDLYEKGR). A compositionally biased stretch (basic residues) spans 407–423 (SGKKGRRKDGRVKKTKT). Positions 518 to 687 (SRPPVVTIMG…LLQSEVLELK (170 aa)) constitute a tr-type G domain. The segment at 527-534 (GHVDHGKT) is G1. 527 to 534 (GHVDHGKT) lines the GTP pocket. The segment at 552–556 (GITQH) is G2. The tract at residues 573–576 (DTPG) is G3. GTP contacts are provided by residues 573 to 577 (DTPGH) and 627 to 630 (NKMD). The tract at residues 627–630 (NKMD) is G4. The interval 663 to 665 (SAK) is G5.

This sequence belongs to the TRAFAC class translation factor GTPase superfamily. Classic translation factor GTPase family. IF-2 subfamily.

The protein resides in the cytoplasm. Functionally, one of the essential components for the initiation of protein synthesis. Protects formylmethionyl-tRNA from spontaneous hydrolysis and promotes its binding to the 30S ribosomal subunits. Also involved in the hydrolysis of GTP during the formation of the 70S ribosomal complex. The chain is Translation initiation factor IF-2 from Desulforapulum autotrophicum (strain ATCC 43914 / DSM 3382 / VKM B-1955 / HRM2) (Desulfobacterium autotrophicum).